A 323-amino-acid chain; its full sequence is Aldo-keto reductase family 1 member C4 (323 aa).

Residues 20–24 and D50 contribute to the NADP(+) site; that span reads GFGSY. The active-site Proton donor is Y55. A substrate-binding site is contributed by H117. NADP(+)-binding positions include 166–167, Q190, 216–221, and 270–280; these read SN, HSALGT, and KSYNEQRIREN.

Belongs to the aldo/keto reductase family. In terms of assembly, monomer. As to expression, high expression in liver. Also expressed in kidney.

The protein resides in the cytoplasm. Its subcellular location is the cytosol. It catalyses the reaction chlordecone alcohol + NADP(+) = chlordecone + NADPH + H(+). The catalysed reaction is a 3alpha-hydroxysteroid + NADP(+) = a 3-oxosteroid + NADPH + H(+). The enzyme catalyses a 3alpha-hydroxysteroid + NAD(+) = a 3-oxosteroid + NADH + H(+). It carries out the reaction 5alpha-androstane-3alpha,17beta-diol + NADP(+) = 17beta-hydroxy-5alpha-androstan-3-one + NADPH + H(+). It catalyses the reaction 5alpha-androstane-3beta,17beta-diol + NADP(+) = 17beta-hydroxy-5alpha-androstan-3-one + NADPH + H(+). The catalysed reaction is 5alpha-androstane-3alpha,17beta-diol + NAD(+) = 17beta-hydroxy-5alpha-androstan-3-one + NADH + H(+). The enzyme catalyses 17beta-estradiol + NADP(+) = estrone + NADPH + H(+). It carries out the reaction 17beta-estradiol + NAD(+) = estrone + NADH + H(+). It catalyses the reaction (20S)-hydroxypregn-4-en-3-one + NADP(+) = progesterone + NADPH + H(+). The catalysed reaction is (20S)-hydroxypregn-4-en-3-one + NAD(+) = progesterone + NADH + H(+). The enzyme catalyses androsterone + NADP(+) = 5alpha-androstan-3,17-dione + NADPH + H(+). It carries out the reaction testosterone + NADP(+) = androst-4-ene-3,17-dione + NADPH + H(+). It catalyses the reaction testosterone + NAD(+) = androst-4-ene-3,17-dione + NADH + H(+). The catalysed reaction is 3alpha-hydroxy-5alpha-androstane 17-O-(beta-D-glucuronate) + NADP(+) = 5alpha-dihydrotestosterone 17-O-(beta-D-glucuronate) + NADPH + H(+). The enzyme catalyses (3beta,5alpha,17beta)-3-hydroxy-androstan-17-yl sulfate + NADP(+) = 5alpha-dihydrotestosterone sulfate + NADPH + H(+). It carries out the reaction 5alpha-androstane-3alpha,17beta-diol + NAD(+) = androsterone + NADH + H(+). The protein operates within steroid metabolism. Its activity is regulated as follows. Potently inhibited by benzbromarone, 3',3'',5',5''-tetrabromophenolphthalein (TBPP) and o-cresolphthalein. Cytosolic aldo-keto reductase that catalyzes the NADH and NADPH-dependent reduction of ketosteroids to hydroxysteroids. Liver specific enzyme that acts as an NAD(P)(H)-dependent 3-, 17- and 20-ketosteroid reductase on the steroid nucleus and side chain. Displays the ability to catalyze both oxidation and reduction in vitro, but most probably acts as a reductase in vivo since the oxidase activity measured in vitro is inhibited by physiological concentration of NADPH. Acts preferentially as a 3-alpha-hydroxysteroid dehydrogenase (HSD) with a subsidiary 3-beta-HSD activity. Catalyzes efficiently the transformation of the potent androgen 5-alpha-dihydrotestosterone (5alpha-DHT or 17beta-hydroxy-5alpha-androstan-3-one) into the less active form, 5-alpha-androstan-3-alpha,17-beta-diol (3-alpha-diol). Catalyzes the reduction of estrone into 17beta-estradiol but with low efficiency. Metabolizes a broad spectrum of natural and synthetic therapeutic steroid and plays an important role in metabolism of androgens, estrogens, progestereone and conjugated steroids. Catalyzes the biotransformation of the pesticide chlordecone (kepone) to its corresponding alcohol leading to increased biliary excretion of the pesticide and concomitant reduction of its neurotoxicity since bile is the major excretory route. This is Aldo-keto reductase family 1 member C4 (AKR1C4) from Macaca fuscata fuscata (Japanese macaque).